The sequence spans 148 residues: Large ribosomal subunit protein uL15 (148 aa).

Positions 1–50 are disordered; sequence MNLSNLKPAEGSTKTRKRIGRGPGSGLGGTSTRGHKGAKSRSGYSKKIGF. Gly residues predominate over residues 21-31; sequence RGPGSGLGGTS.

It belongs to the universal ribosomal protein uL15 family. Part of the 50S ribosomal subunit.

Functionally, binds to the 23S rRNA. The sequence is that of Large ribosomal subunit protein uL15 from Bacteroides fragilis (strain ATCC 25285 / DSM 2151 / CCUG 4856 / JCM 11019 / LMG 10263 / NCTC 9343 / Onslow / VPI 2553 / EN-2).